A 307-amino-acid polypeptide reads, in one-letter code: Small ribosomal subunit biogenesis GTPase RsgA (307 aa).

The region spanning lysine 64 to leucine 229 is the CP-type G domain. GTP contacts are provided by residues serine 113–aspartate 116 and glycine 172–threonine 180. Cysteine 253, cysteine 258, histidine 260, and cysteine 266 together coordinate Zn(2+).

Belongs to the TRAFAC class YlqF/YawG GTPase family. RsgA subfamily. In terms of assembly, monomer. Associates with 30S ribosomal subunit, binds 16S rRNA. Zn(2+) serves as cofactor.

The protein localises to the cytoplasm. In terms of biological role, one of several proteins that assist in the late maturation steps of the functional core of the 30S ribosomal subunit. Helps release RbfA from mature subunits. May play a role in the assembly of ribosomal proteins into the subunit. Circularly permuted GTPase that catalyzes slow GTP hydrolysis, GTPase activity is stimulated by the 30S ribosomal subunit. This Lactococcus lactis subsp. lactis (strain IL1403) (Streptococcus lactis) protein is Small ribosomal subunit biogenesis GTPase RsgA.